A 140-amino-acid polypeptide reads, in one-letter code: Nucleoside diphosphate kinase (140 aa).

The ATP site is built by lysine 11, phenylalanine 59, arginine 87, threonine 93, arginine 104, and asparagine 114. The Pros-phosphohistidine intermediate role is filled by histidine 117.

Belongs to the NDK family. Homotetramer. Mg(2+) serves as cofactor.

The protein resides in the cytoplasm. The enzyme catalyses a 2'-deoxyribonucleoside 5'-diphosphate + ATP = a 2'-deoxyribonucleoside 5'-triphosphate + ADP. It carries out the reaction a ribonucleoside 5'-diphosphate + ATP = a ribonucleoside 5'-triphosphate + ADP. Major role in the synthesis of nucleoside triphosphates other than ATP. The ATP gamma phosphate is transferred to the NDP beta phosphate via a ping-pong mechanism, using a phosphorylated active-site intermediate. In Persephonella marina (strain DSM 14350 / EX-H1), this protein is Nucleoside diphosphate kinase.